A 142-amino-acid polypeptide reads, in one-letter code: Putative pre-16S rRNA nuclease (142 aa).

Belongs to the YqgF nuclease family.

The protein resides in the cytoplasm. In terms of biological role, could be a nuclease involved in processing of the 5'-end of pre-16S rRNA. The sequence is that of Putative pre-16S rRNA nuclease from Chlorobaculum tepidum (strain ATCC 49652 / DSM 12025 / NBRC 103806 / TLS) (Chlorobium tepidum).